Reading from the N-terminus, the 2313-residue chain is Serine/threonine-protein kinase smg-1 (2313 aa).

Residues 779 to 791 (NRKSSDKKPKSTT) are compositionally biased toward basic and acidic residues. Residues 779–798 (NRKSSDKKPKSTTEDVPPPA) form a disordered region. An FAT domain is found at 1045–1528 (ARERLQLVES…VFQVVSGAAS (484 aa)). An HEAT repeat occupies 1478 to 1514 (VHVWKEILPQLFARLSHPSDHIRKTLVDLISRVCTAA). The 346-residue stretch at 1746–2091 (VADNVTILPT…DTIELFQLRV (346 aa)) folds into the PI3K/PI4K catalytic domain. The tract at residues 1752 to 1758 (ILPTKTR) is G-loop. The catalytic loop stretch occupies residues 1954–1962 (GLGDRHLDN). Positions 1974 to 1998 (HIDYNICFDKGKILRIPETVPFRLS) are activation loop. One can recognise an FATC domain in the interval 2281-2313 (RKLSPREEADVLIAEATSSANLAQMYEGWTAWV).

This sequence belongs to the PI3/PI4-kinase family. As to quaternary structure, component of a post-splicing multiprotein NMD complex. Mn(2+) serves as cofactor.

The protein localises to the cytoplasm. The catalysed reaction is L-seryl-[protein] + ATP = O-phospho-L-seryl-[protein] + ADP + H(+). It carries out the reaction L-threonyl-[protein] + ATP = O-phospho-L-threonyl-[protein] + ADP + H(+). In terms of biological role, serine/threonine protein kinase involved in mRNA surveillance. Recognizes the substrate consensus sequence [ST]-Q. Involved in nonsense-mediated decay (NMD) of mRNAs containing premature stop codons by phosphorylating smg-2. The chain is Serine/threonine-protein kinase smg-1 (smg-1) from Caenorhabditis briggsae.